The sequence spans 582 residues: Protein LYRIC (582 aa).

Residues 1–48 (MAARSWQDELAQQAEEGSARLREMLSVGLGFLRTELGLDLGLEPKRYP) lie on the Lumenal side of the membrane. The segment at 1–71 (MAARSWQDEL…LLLFLLGYGW (71 aa)) is activation of NF-kappa-B. The chain crosses the membrane as a helical span at residues 49–69 (GWVILVGTGALGLLLLFLLGY). Residues 70 to 582 (GWAAACAGAR…KKKKKARRET (513 aa)) lie on the Cytoplasmic side of the membrane. Positions 72 to 169 (AAACAGARKK…EKSKKNKKKS (98 aa)) are interaction with BCCIP. Positions 78–222 (ARKKRRSPPR…DSGSLDSTIP (145 aa)) are disordered. A compositionally biased stretch (low complexity) spans 93–106 (AAVPAAAPDDLALL). Positions 101-205 (DDLALLKNLR…ISHREKRQQR (105 aa)) are interaction with RELA. The span at 109–127 (LRSEEQKKKNRKKLSEKPK) shows a compositional bias: basic and acidic residues. Position 143 is a phosphothreonine (Thr-143). A compositionally biased stretch (basic residues) spans 160–169 (EKSKKNKKKS). Ser-180 bears the Phosphoserine mark. Residues 198-208 (HREKRQQRKRD) show a composition bias toward basic residues. A phosphoserine mark is found at Ser-216 and Ser-251. Lys-264 is subject to N6-acetyllysine. Residues 280-582 (TVNGGGWNEK…KKKKKARRET (303 aa)) form a disordered region. A phosphoserine mark is found at Ser-298, Ser-306, Ser-308, Ser-311, Ser-323, Ser-339, Ser-344, and Ser-369. Polar residues predominate over residues 320 to 333 (SAWSQDTGDANTNG). 2 stretches are compositionally biased toward polar residues: residues 354–372 (EPVSQSTTSDYQWDVSRNQ) and 383–394 (NGLSSADPNSDW). A lung-homing for mammary tumors region spans residues 381–443 (GLNGLSSADP…EGALPTGKSK (63 aa)). A phosphoserine mark is found at Ser-415 and Ser-426. The span at 421–434 (DDQKVSDDDKEKGE) shows a compositional bias: basic and acidic residues. Positions 441–451 (KSKKKKKKKKK) are enriched in basic residues. Position 457 is a phosphoserine (Ser-457). A Phosphothreonine modification is found at Thr-458. A phosphoserine mark is found at Ser-478, Ser-494, and Ser-496. Composition is skewed to polar residues over residues 504–520 (KNSQPIKTLPPATSTEP) and 549–568 (NTKQNSVPPSQTKSETSWES). Ser-568 is modified (phosphoserine). Basic residues predominate over residues 571-582 (QIKKKKKARRET).

Interacts with BCCIP, CREBBP/CBP and RELA/p65. As to expression, widely expressed with highest levels in muscle-dominating organs such as skeletal muscle, heart, tongue and small intestine and in endocrine glands such as thyroid and adrenal gland. Overexpressed in various cancers including breast, brain, prostate, melanoma and glioblastoma multiforme.

The protein resides in the endoplasmic reticulum membrane. Its subcellular location is the nucleus membrane. It localises to the cell junction. The protein localises to the tight junction. It is found in the nucleus. The protein resides in the nucleolus. Its subcellular location is the cytoplasm. It localises to the perinuclear region. Functionally, down-regulates SLC1A2/EAAT2 promoter activity when expressed ectopically. Activates the nuclear factor kappa-B (NF-kappa-B) transcription factor. Promotes anchorage-independent growth of immortalized melanocytes and astrocytes which is a key component in tumor cell expansion. Promotes lung metastasis and also has an effect on bone and brain metastasis, possibly by enhancing the seeding of tumor cells to the target organ endothelium. Induces chemoresistance. The chain is Protein LYRIC (MTDH) from Homo sapiens (Human).